The primary structure comprises 398 residues: Cathepsin E (398 aa).

The first 21 residues, 1–21 (MKPLFVLLLLLLLLDLAQAQG), serve as a signal peptide directing secretion. The propeptide at 22-58 (VLHRVPLRRHQSLRKKLRAQGQLSDFWRSHNLDMIEF) is activation peptide. One can recognise a Peptidase A1 domain in the interval 80–394 (YFGTVSIGSP…DRGNNQVGLA (315 aa)). Residue N92 is glycosylated (N-linked (GlcNAc...) asparagine). The active site involves D98. Disulfide bonds link C111–C116 and C274–C278. D283 is an active-site residue.

Belongs to the peptidase A1 family. Homodimer; disulfide-linked. In terms of processing, glycosylated. The nature of the carbohydrate chain varies between cell types. In brain microglia, the proenzyme contains a high mannose-type oligosaccharide, while the mature enzyme contains a complex-type oligosaccharide. In stomach and spleen, the mature enzyme contains a high mannose-type oligosaccharide. In erythrocyte membranes, the mature enzyme contains a complex-type oligosaccharide. Expressed abundantly in lymphocytes and macrophages of the thymus and spleen, and in the M cells of the intestine. In the brain, expression is limited to reactive microglial cells, the large pyrimidial neurons in the cerebral cortex, the CA1 and CA3 pyrimidial neurons of the hippocampus, the large neurons of the neostriatum, and the Purkinje neurons of the cerebellum.

The protein localises to the endosome. It carries out the reaction Similar to cathepsin D, but slightly broader specificity.. In terms of biological role, may have a role in immune function. Probably involved in the processing of antigenic peptides during MHC class II-mediated antigen presentation. May play a role in activation-induced lymphocyte depletion in the thymus, and in neuronal degeneration and glial cell activation in the brain. The protein is Cathepsin E (Ctse) of Rattus norvegicus (Rat).